A 148-amino-acid chain; its full sequence is Large ribosomal subunit protein uL22c (148 aa).

The protein belongs to the universal ribosomal protein uL22 family. As to quaternary structure, part of the 50S ribosomal subunit.

The protein localises to the plastid. The protein resides in the chloroplast. Functionally, this protein binds specifically to 23S rRNA. Its function is as follows. The globular domain of the protein is located near the polypeptide exit tunnel on the outside of the subunit, while an extended beta-hairpin is found that lines the wall of the exit tunnel in the center of the 70S ribosome. The protein is Large ribosomal subunit protein uL22c (rpl22) of Triticum aestivum (Wheat).